Reading from the N-terminus, the 283-residue chain is Flagellar filament 35 kDa core protein (283 aa).

Belongs to the bacterial flagellin family. In terms of assembly, the flagellum consists of two outer layers around a core that contains several antigenically related polypeptides.

The protein resides in the periplasmic flagellum. It localises to the periplasm. Component of the core of the flagella. The protein is Flagellar filament 35 kDa core protein (flaB) of Leptospira interrogans serogroup Icterohaemorrhagiae serovar copenhageni (strain Fiocruz L1-130).